The sequence spans 225 residues: UPF0758 protein BCQ_4241 (225 aa).

In terms of domain architecture, MPN spans 103–225 (SIRSPEDCAR…FVSLKEKGHI (123 aa)). Zn(2+) contacts are provided by histidine 174, histidine 176, and aspartate 187. Residues 174 to 187 (HNHPSGDPAPSRED) carry the JAMM motif motif.

It belongs to the UPF0758 family.

The protein is UPF0758 protein BCQ_4241 of Bacillus cereus (strain Q1).